The sequence spans 257 residues: Origin recognition complex subunit 6 (257 aa).

Positions 186-222 (HKESKVPSSTDMEGKLKENQNENIKGHEAKKAHKPPP) are disordered. Residues 197-222 (MEGKLKENQNENIKGHEAKKAHKPPP) are compositionally biased toward basic and acidic residues.

The protein belongs to the ORC6 family. In terms of assembly, ORC is composed of six subunits.

Its subcellular location is the nucleus. Component of the origin recognition complex (ORC) that binds origins of replication. DNA-binding is ATP-dependent, however specific DNA sequences that define origins of replication have not been identified so far. ORC is required to assemble the pre-replication complex necessary to initiate DNA replication. This Drosophila melanogaster (Fruit fly) protein is Origin recognition complex subunit 6 (Orc6).